A 114-amino-acid polypeptide reads, in one-letter code: Cytochrome c2 (114 aa).

At glutamine 1 the chain carries Pyrrolidone carboxylic acid. Heme c-binding residues include cysteine 13, cysteine 16, histidine 17, and methionine 93.

Belongs to the cytochrome c family. In terms of processing, binds 1 heme c group covalently per subunit.

In terms of biological role, cytochrome c2 is found mainly in purple, non-sulfur, photosynthetic bacteria where it functions as the electron donor to the oxidized bacteriochlorophyll in the photophosphorylation pathway. However, it may also have a role in the respiratory chain and is found in some non-photosynthetic bacteria. This Rhodopseudomonas palustris protein is Cytochrome c2 (cycA).